Reading from the N-terminus, the 173-residue chain is Large ribosomal subunit protein uL16 (173 aa).

This sequence belongs to the universal ribosomal protein uL16 family.

The chain is Large ribosomal subunit protein uL16 from Methanosarcina mazei (strain ATCC BAA-159 / DSM 3647 / Goe1 / Go1 / JCM 11833 / OCM 88) (Methanosarcina frisia).